Here is an 88-residue protein sequence, read N- to C-terminus: MTYQDGSRRMRGRGGRKKVCEFSRLGILPDYKDPERLKRFLGPTGKILPRRRTGLSAKMQRKLTIAIKRARHMALLPFVERSITDRRR.

Belongs to the bacterial ribosomal protein bS18 family. Part of the 30S ribosomal subunit. Forms a tight heterodimer with protein bS6.

In terms of biological role, binds as a heterodimer with protein bS6 to the central domain of the 16S rRNA, where it helps stabilize the platform of the 30S subunit. The chain is Small ribosomal subunit protein bS18A from Roseiflexus sp. (strain RS-1).